Reading from the N-terminus, the 309-residue chain is HPr kinase/phosphorylase (309 aa).

Catalysis depends on residues His-138 and Lys-159. Gly-153 to Ser-160 serves as a coordination point for ATP. Ser-160 contacts Mg(2+). The Proton acceptor; for phosphorylation activity. Proton donor; for dephosphorylation activity role is filled by Asp-177. Positions Leu-201–Asn-210 are important for the catalytic mechanism of both phosphorylation and dephosphorylation. Residue Glu-202 coordinates Mg(2+). Arg-243 is an active-site residue. The important for the catalytic mechanism of dephosphorylation stretch occupies residues Pro-264–Arg-269.

Belongs to the HPrK/P family. In terms of assembly, homohexamer. Requires Mg(2+) as cofactor.

The catalysed reaction is [HPr protein]-L-serine + ATP = [HPr protein]-O-phospho-L-serine + ADP + H(+). It carries out the reaction [HPr protein]-O-phospho-L-serine + phosphate + H(+) = [HPr protein]-L-serine + diphosphate. Its function is as follows. Catalyzes the ATP- as well as the pyrophosphate-dependent phosphorylation of a specific serine residue in HPr, a phosphocarrier protein of the phosphoenolpyruvate-dependent sugar phosphotransferase system (PTS). HprK/P also catalyzes the pyrophosphate-producing, inorganic phosphate-dependent dephosphorylation (phosphorolysis) of seryl-phosphorylated HPr (P-Ser-HPr). The two antagonistic activities of HprK/P are regulated by several intracellular metabolites, which change their concentration in response to the absence or presence of rapidly metabolisable carbon sources (glucose, fructose, etc.) in the growth medium. Also phosphorylates/dephosphorylates the HPr-like catabolite repression protein crh on a specific serine residue. Therefore, by controlling the phosphorylation state of HPr and crh, HPrK/P is a sensor enzyme that plays a major role in the regulation of carbon metabolism and sugar transport: it mediates carbon catabolite repression (CCR), and regulates PTS-catalyzed carbohydrate uptake and inducer exclusion. The chain is HPr kinase/phosphorylase from Bacillus anthracis (strain A0248).